Reading from the N-terminus, the 362-residue chain is S-adenosylmethionine decarboxylase proenzyme (362 aa).

Active-site residues include Glu-11 and Glu-14. Ser-71 acts as the Schiff-base intermediate with substrate; via pyruvic acid in catalysis. Position 71 is a pyruvic acid (Ser); by autocatalysis (Ser-71). The active-site Proton donor; for catalytic activity is the Cys-85. Active-site proton acceptor; for processing activity residues include Ser-234 and His-247.

Belongs to the eukaryotic AdoMetDC family. Pyruvate is required as a cofactor. Post-translationally, is synthesized initially as an inactive proenzyme. Formation of the active enzyme involves a self-maturation process in which the active site pyruvoyl group is generated from an internal serine residue via an autocatalytic post-translational modification. Two non-identical subunits are generated from the proenzyme in this reaction, and the pyruvate is formed at the N-terminus of the alpha chain, which is derived from the carboxyl end of the proenzyme. The post-translation cleavage follows an unusual pathway, termed non-hydrolytic serinolysis, in which the side chain hydroxyl group of the serine supplies its oxygen atom to form the C-terminus of the beta chain, while the remainder of the serine residue undergoes an oxidative deamination to produce ammonia and the pyruvoyl group blocking the N-terminus of the alpha chain.

It carries out the reaction S-adenosyl-L-methionine + H(+) = S-adenosyl 3-(methylsulfanyl)propylamine + CO2. Its pathway is amine and polyamine biosynthesis; S-adenosylmethioninamine biosynthesis; S-adenosylmethioninamine from S-adenosyl-L-methionine: step 1/1. The chain is S-adenosylmethionine decarboxylase proenzyme (SAMDC) from Ipomoea batatas (Sweet potato).